The chain runs to 281 residues: Merozoite surface protein 2 (281 aa).

An N-terminal signal peptide occupies residues 1-20 (MKVIKTLSIINFFIFVTFNI). Residues asparagine 22 and asparagine 36 are each glycosylated (N-linked (GlcNAc...) asparagine). Positions 42–242 (SMEESNPPTG…DSQKECTDGN (201 aa)) are disordered. A polymorphic region region spans residues 44–207 (EESNPPTGAS…EQTESPELQS (164 aa)). Tandem repeats lie at residues 51–58 (GASGRAGA), 59–66 (GASGRAGA), and 67–74 (GASGRAGA). The segment at 51 to 74 (GASGRAGAGASGRAGAGASGRAGA) is 3 X 8 AA tandem repeats of G-A-S-G-R-A-G-A. Gly residues predominate over residues 54–76 (GRAGAGASGRAGAGASGRAGAGA). Residues 77 to 133 (GAVASAGSGDGAVASAGNGANPGADAKRSTSTPATTTTTTTTNDAEASTSTSSENPN) show a composition bias toward low complexity. Composition is skewed to polar residues over residues 150–174 (NKAN…NVPP) and 181–209 (KSPT…QSAP). N-linked (GlcNAc...) asparagine glycosylation is present at asparagine 158. N-linked (GlcNAc...) asparagine glycosylation is present at asparagine 230. A disulfide bridge connects residues cysteine 238 and cysteine 246. N-linked (GlcNAc...) asparagine glycosylation is found at asparagine 254 and asparagine 255. Asparagine 255 is lipidated: GPI-anchor amidated asparagine. Positions 256–281 (SSNIASINKFVVLISATLVLSFAIFI) are cleaved as a propeptide — removed in mature form.

Its subcellular location is the cell membrane. Functionally, may play a role in the merozoite attachment to the erythrocyte. The polypeptide is Merozoite surface protein 2 (Plasmodium falciparum (isolate thtn / Thailand)).